The chain runs to 385 residues: MGRCVVIGAGKASAAMAAALDTVWSDVDLSGVVVTRYGHAVPSGRIRIIEASHPVPDDMSVEAAVRIIGAVRDLGPDDLVIALISGGGSSLLVSPAAGMTLADKKAVNKALLASGATISEMNAVRKQLSGIKGGRLAQLAHPARVVTLVISDVPGDDPSEIASGPTVANDTTIDDAREIVSRYRLVLPPAAQDVLANGGARNCTGKVSSDVRMIASPSMALDAAAAVAAANGLTPVILGDALQGEARDVGTVFAGIAMSASTKGLPVRGPAVLLSGGETSVSLPADTKGRGGRNSEFLLSLAIGLDGAKGIWALSGDTDGIDGIEDAAGAMIGPDSLARMRGSGIDPRSALSRHDSYTAFKAIDDLVITGPTLTNVNDIRAILIG.

The catalysed reaction is (R)-glycerate + NAD(+) = 3-hydroxypyruvate + NADH + H(+). It carries out the reaction (R)-glycerate + NADP(+) = 3-hydroxypyruvate + NADPH + H(+). It functions in the pathway carbohydrate acid metabolism; tartrate degradation; 3-hydroxypyruvate from D-glycerate: step 1/1. Its function is as follows. Degrades an unidentified toxic product from the first step of tartrate degradation. This Agrobacterium vitis (Rhizobium vitis) protein is Putative hydroxypyruvate reductase (ttuD).